The chain runs to 174 residues: Bifunctional protein PyrR 2 (174 aa).

Residues 39–40, 100–108, and R133 contribute to the substrate site; these read TR and DDVLFTGRT. Residues 96-108 carry the PRPP-binding motif; the sequence is VILVDDVLFTGRT.

This sequence belongs to the purine/pyrimidine phosphoribosyltransferase family. PyrR subfamily. In terms of assembly, homodimer and homohexamer; in equilibrium.

The catalysed reaction is UMP + diphosphate = 5-phospho-alpha-D-ribose 1-diphosphate + uracil. Its function is as follows. Regulates transcriptional attenuation of the pyrimidine nucleotide (pyr) operon by binding in a uridine-dependent manner to specific sites on pyr mRNA. This disrupts an antiterminator hairpin in the RNA and favors formation of a downstream transcription terminator, leading to a reduced expression of downstream genes. Functionally, also displays a weak uracil phosphoribosyltransferase activity which is not physiologically significant. The protein is Bifunctional protein PyrR 2 (pyrR2) of Lactiplantibacillus plantarum (strain ATCC BAA-793 / NCIMB 8826 / WCFS1) (Lactobacillus plantarum).